The primary structure comprises 599 residues: Sulfite reductase [NADPH] flavoprotein alpha-component (599 aa).

The Flavodoxin-like domain maps to 64–202 (ITIISASQTG…AASEWRARVV (139 aa)). Residues 70-75 (SQTGNA), 117-120 (STQG), and 153-162 (LGDSSYEFFC) each bind FMN. The FAD-binding FR-type domain occupies 234–448 (DAPLVASLSV…IEHNDNFRLP (215 aa)). FAD is bound by residues Thr-322, Ala-356, 386–389 (RLYS), 404–406 (TVG), Tyr-410, and 419–422 (GGAS). Residues 519 to 520 (SR), 525 to 529 (KVYVQ), and Asp-561 contribute to the NADP(+) site. Residue Tyr-599 coordinates FAD.

The protein belongs to the NADPH-dependent sulphite reductase flavoprotein subunit CysJ family. It in the N-terminal section; belongs to the flavodoxin family. This sequence in the C-terminal section; belongs to the flavoprotein pyridine nucleotide cytochrome reductase family. In terms of assembly, alpha(8)-beta(8). The alpha component is a flavoprotein, the beta component is a hemoprotein. The cofactor is FAD. FMN is required as a cofactor.

The enzyme catalyses hydrogen sulfide + 3 NADP(+) + 3 H2O = sulfite + 3 NADPH + 4 H(+). Its pathway is sulfur metabolism; hydrogen sulfide biosynthesis; hydrogen sulfide from sulfite (NADPH route): step 1/1. Component of the sulfite reductase complex that catalyzes the 6-electron reduction of sulfite to sulfide. This is one of several activities required for the biosynthesis of L-cysteine from sulfate. The flavoprotein component catalyzes the electron flow from NADPH -&gt; FAD -&gt; FMN to the hemoprotein component. In Shigella flexneri serotype 5b (strain 8401), this protein is Sulfite reductase [NADPH] flavoprotein alpha-component.